Here is a 96-residue protein sequence, read N- to C-terminus: UPF0729 protein AGAP000931 (96 aa).

Positions 65-96 (VPPGHDPVGPTVAADTATSDAVDDAASSKKTL) are disordered. Low complexity predominate over residues 75 to 96 (TVAADTATSDAVDDAASSKKTL).

The protein belongs to the UPF0729 family.

The sequence is that of UPF0729 protein AGAP000931 from Anopheles gambiae (African malaria mosquito).